The primary structure comprises 155 residues: Small ribosomal subunit protein uS7c (155 aa).

The protein belongs to the universal ribosomal protein uS7 family. Part of the 30S ribosomal subunit.

The protein resides in the plastid. It is found in the chloroplast. One of the primary rRNA binding proteins, it binds directly to 16S rRNA where it nucleates assembly of the head domain of the 30S subunit. The protein is Small ribosomal subunit protein uS7c (rps7) of Yucca glauca (Soapweed yucca).